Consider the following 89-residue polypeptide: Small ribosomal subunit protein uS15 (89 aa).

This sequence belongs to the universal ribosomal protein uS15 family. Part of the 30S ribosomal subunit. Forms a bridge to the 50S subunit in the 70S ribosome, contacting the 23S rRNA.

One of the primary rRNA binding proteins, it binds directly to 16S rRNA where it helps nucleate assembly of the platform of the 30S subunit by binding and bridging several RNA helices of the 16S rRNA. Its function is as follows. Forms an intersubunit bridge (bridge B4) with the 23S rRNA of the 50S subunit in the ribosome. This Pseudomonas fluorescens (strain Pf0-1) protein is Small ribosomal subunit protein uS15.